We begin with the raw amino-acid sequence, 545 residues long: Chaperonin GroEL (545 aa).

ATP-binding positions include 30–33 (TLGP), Lys51, 87–91 (DGTTT), Gly415, 479–481 (NAA), and Asp495. The disordered stretch occupies residues 526 to 545 (KEDKPDLGGAGGMGGMGGMM). Over residues 533-545 (GGAGGMGGMGGMM) the composition is skewed to gly residues.

It belongs to the chaperonin (HSP60) family. Forms a cylinder of 14 subunits composed of two heptameric rings stacked back-to-back. Interacts with the co-chaperonin GroES.

It localises to the cytoplasm. It catalyses the reaction ATP + H2O + a folded polypeptide = ADP + phosphate + an unfolded polypeptide.. Its function is as follows. Together with its co-chaperonin GroES, plays an essential role in assisting protein folding. The GroEL-GroES system forms a nano-cage that allows encapsulation of the non-native substrate proteins and provides a physical environment optimized to promote and accelerate protein folding. The chain is Chaperonin GroEL from Sodalis glossinidius.